The sequence spans 390 residues: GTPase Obg (390 aa).

The region spanning Met1–Leu159 is the Obg domain. One can recognise an OBG-type G domain in the interval Ala160–Glu333. GTP-binding positions include Gly166–Ser173, Phe191–Ile195, Asp213–Gly216, Asn283–Asp286, and Ser314–Val316. The Mg(2+) site is built by Ser173 and Thr193.

Belongs to the TRAFAC class OBG-HflX-like GTPase superfamily. OBG GTPase family. In terms of assembly, monomer. The cofactor is Mg(2+).

Its subcellular location is the cytoplasm. In terms of biological role, an essential GTPase which binds GTP, GDP and possibly (p)ppGpp with moderate affinity, with high nucleotide exchange rates and a fairly low GTP hydrolysis rate. Plays a role in control of the cell cycle, stress response, ribosome biogenesis and in those bacteria that undergo differentiation, in morphogenesis control. The sequence is that of GTPase Obg from Vibrio atlanticus (strain LGP32) (Vibrio splendidus (strain Mel32)).